The primary structure comprises 74 residues: MRAIISLLLISTMVFGVIEAVSLEEGLKIFEGERGDCVGESQQCADWSGPYCCKGYYCTCRYFPKCICVNDNGK.

A signal peptide spans 1–20 (MRAIISLLLISTMVFGVIEA). A propeptide spanning residues 21–34 (VSLEEGLKIFEGER) is cleaved from the precursor. 4 disulfide bridges follow: Cys37-Cys53, Cys44-Cys58, Cys52-Cys68, and Cys60-Cys66. Asn72 is modified (asparagine amide).

The protein belongs to the neurotoxin 07 (Beta/delta-agtx) family. 03 (aga-4) subfamily. Aga sub-subfamily. Expressed by the venom gland.

The protein resides in the secreted. Its function is as follows. Insecticidal neurotoxin that modulates the insect Nav channel (DmNaV1/tipE (para/tipE)) in a unique manner, with both the activation and inactivation processes being affected. The voltage dependence of activation is shifted toward more hyperpolarized potentials (analogous to site 4 toxins) and a non-inactivating persistent sodium current is induced (site 3-like action). Interestingly, both effects take place in a voltage-dependent manner, producing a bell-shaped curve between -80 and 0 mV. In vivo, induces an irreversible spastic paralysis when injected into insects. The chain is U3-agatoxin-Ao1f from Agelena orientalis (Funnel-web spider).